We begin with the raw amino-acid sequence, 550 residues long: Hydroxylamine reductase (550 aa).

Residues Cys-3, Cys-6, Cys-18, and Cys-25 each coordinate [2Fe-2S] cluster. 8 residues coordinate hybrid [4Fe-2O-2S] cluster: His-249, Glu-273, Cys-317, Cys-405, Cys-433, Cys-458, Glu-492, and Lys-494. Cys-405 carries the cysteine persulfide modification.

The protein belongs to the HCP family. The cofactor is [2Fe-2S] cluster. Hybrid [4Fe-2O-2S] cluster is required as a cofactor.

Its subcellular location is the cytoplasm. The enzyme catalyses A + NH4(+) + H2O = hydroxylamine + AH2 + H(+). Functionally, catalyzes the reduction of hydroxylamine to form NH(3) and H(2)O. In Pectobacterium carotovorum subsp. carotovorum (strain PC1), this protein is Hydroxylamine reductase.